The primary structure comprises 185 residues: Ribosome-recycling factor (185 aa).

This sequence belongs to the RRF family.

The protein localises to the cytoplasm. Its function is as follows. Responsible for the release of ribosomes from messenger RNA at the termination of protein biosynthesis. May increase the efficiency of translation by recycling ribosomes from one round of translation to another. The chain is Ribosome-recycling factor from Oceanobacillus iheyensis (strain DSM 14371 / CIP 107618 / JCM 11309 / KCTC 3954 / HTE831).